We begin with the raw amino-acid sequence, 39 residues long: Potassium channel toxin alpha-KTx 2.18 (39 aa).

Disulfide bonds link Cys-7–Cys-29, Cys-13–Cys-34, and Cys-17–Cys-36. Ile-39 carries the isoleucine amide modification.

Belongs to the short scorpion toxin superfamily. Potassium channel inhibitor family. Alpha-KTx 02 subfamily. Expressed by the venom gland.

It localises to the secreted. Its function is as follows. Weakly blocks Kv1.3/KCNA3 voltage-gated potassium channels. This chain is Potassium channel toxin alpha-KTx 2.18, found in Centruroides limpidus (Mexican scorpion).